The sequence spans 212 residues: Large ribosomal subunit protein uL1 (212 aa).

The protein belongs to the universal ribosomal protein uL1 family. As to quaternary structure, part of the 50S ribosomal subunit.

In terms of biological role, binds directly to 23S rRNA. Probably involved in E site tRNA release. Functionally, protein L1 is also a translational repressor protein, it controls the translation of its operon by binding to its mRNA. The chain is Large ribosomal subunit protein uL1 from Haloquadratum walsbyi (strain DSM 16790 / HBSQ001).